The following is a 252-amino-acid chain: Hydroxyacylglutathione hydrolase (252 aa).

Zn(2+) is bound by residues His54, His56, Asp58, His59, His113, Asp132, and His170.

The protein belongs to the metallo-beta-lactamase superfamily. Glyoxalase II family. Monomer. Zn(2+) is required as a cofactor.

The catalysed reaction is an S-(2-hydroxyacyl)glutathione + H2O = a 2-hydroxy carboxylate + glutathione + H(+). Its pathway is secondary metabolite metabolism; methylglyoxal degradation; (R)-lactate from methylglyoxal: step 2/2. Functionally, thiolesterase that catalyzes the hydrolysis of S-D-lactoyl-glutathione to form glutathione and D-lactic acid. This is Hydroxyacylglutathione hydrolase from Gloeobacter violaceus (strain ATCC 29082 / PCC 7421).